The chain runs to 133 residues: Interferon-induced transmembrane protein 3 (133 aa).

Over methionine 1–histidine 57 the chain is Cytoplasmic. Phosphotyrosine is present on tyrosine 20. A Glycyl lysine isopeptide (Lys-Gly) (interchain with G-Cter in ubiquitin) cross-link involves residue lysine 24. An intramembrane region (helical) is located at residues valine 58–phenylalanine 78. The interaction with SPP1 stretch occupies residues tryptophan 60–valine 93. S-palmitoyl cysteine attachment occurs at residues cysteine 71 and cysteine 72. The Cytoplasmic segment spans residues alanine 79–asparagine 107. Glycyl lysine isopeptide (Lys-Gly) (interchain with G-Cter in ubiquitin) cross-links involve residues lysine 83, lysine 88, and lysine 104. Cysteine 105 carries S-palmitoyl cysteine lipidation. A helical transmembrane segment spans residues isoleucine 108–isoleucine 128. Residues isoleucine 108 to glycine 133 form an interaction with VAPA region. Topologically, residues phenylalanine 129–glycine 133 are extracellular.

This sequence belongs to the CD225/Dispanin family. In terms of assembly, interacts with ATP6V0B. Interacts with CD81. Interacts with SPP1; the interaction reduces OPN expression. Interacts with VAPA. Interacts with BRI3 (isoforms 1 and 2); the interaction with isoform 2 is weaker than with isoform 1. In terms of processing, palmitoylation on membrane-proximal cysteines controls clustering in membrane compartments and antiviral activity against influenza virus and hepatitis C virus (HCV). Has no effect on anti-SARS-CoV-2 activity. Not glycosylated. Post-translationally, polyubiquitinated with both 'Lys-48' and 'Lys-63' linkages. Ubiquitination negatively regulates antiviral activity. Lys-24 is the most prevalent ubiquitination site. In terms of processing, phosphorylation at Tyr-20 is required for endosomal and lysosomal location.

Its subcellular location is the cell membrane. The protein localises to the late endosome membrane. It localises to the early endosome membrane. It is found in the lysosome membrane. The protein resides in the cytoplasm. Its subcellular location is the perinuclear region. Its function is as follows. IFN-induced antiviral protein which disrupts intracellular cholesterol homeostasis. Inhibits the entry of viruses to the host cell cytoplasm by preventing viral fusion with cholesterol depleted endosomes. May inactivate new enveloped viruses which buds out of the infected cell, by letting them go out with a cholesterol depleted membrane. Active against multiple viruses, including influenza A virus, SARS coronaviruses (SARS-CoV and SARS-CoV-2), Marburg virus (MARV), Ebola virus (EBOV), Dengue virus (DNV), West Nile virus (WNV), human immunodeficiency virus type 1 (HIV-1), hepatitis C virus (HCV) and vesicular stomatitis virus (VSV). Can inhibit: influenza virus hemagglutinin protein-mediated viral entry, MARV and EBOV GP1,2-mediated viral entry, SARS-CoV and SARS-CoV-2 S protein-mediated viral entry and VSV G protein-mediated viral entry. Plays a critical role in the structural stability and function of vacuolar ATPase (v-ATPase). Establishes physical contact with the v-ATPase of endosomes which is critical for proper clathrin localization and is also required for the function of the v-ATPase to lower the pH in phagocytic endosomes thus establishing an antiviral state. In hepatocytes, IFITM proteins act in a coordinated manner to restrict HCV infection by targeting the endocytosed HCV virion for lysosomal degradation. IFITM2 and IFITM3 display anti-HCV activity that may complement the anti-HCV activity of IFITM1 by inhibiting the late stages of HCV entry, possibly in a coordinated manner by trapping the virion in the endosomal pathway and targeting it for degradation at the lysosome. Exerts opposing activities on SARS-CoV-2, including amphipathicity-dependent restriction of virus at endosomes and amphipathicity-independent enhancement of infection at the plasma membrane. The chain is Interferon-induced transmembrane protein 3 from Homo sapiens (Human).